The primary structure comprises 479 residues: Glutamate--tRNA ligase 2 (479 aa).

The short motif at Pro18–Gly28 is the 'HIGH' region element. Residues Lys244 to Arg248 carry the 'KMSKS' region motif. Lys247 lines the ATP pocket.

Belongs to the class-I aminoacyl-tRNA synthetase family. Glutamate--tRNA ligase type 1 subfamily. As to quaternary structure, monomer.

It is found in the cytoplasm. It catalyses the reaction tRNA(Glu) + L-glutamate + ATP = L-glutamyl-tRNA(Glu) + AMP + diphosphate. Functionally, catalyzes the attachment of glutamate to tRNA(Glu) in a two-step reaction: glutamate is first activated by ATP to form Glu-AMP and then transferred to the acceptor end of tRNA(Glu). The chain is Glutamate--tRNA ligase 2 from Maricaulis maris (strain MCS10) (Caulobacter maris).